A 437-amino-acid chain; its full sequence is GTPase Obg (437 aa).

In terms of domain architecture, Obg spans 2 to 160 (SMFLDTAKIS…RQLELELKIL (159 aa)). Residues 161–338 (ADVGLVGFPS…LLEATAELLA (178 aa)) enclose the OBG-type G domain. Residues 167-174 (GFPSVGKS), 192-196 (FTTIV), 214-217 (DLPG), 284-287 (NKMD), and 319-321 (SSL) contribute to the GTP site. Mg(2+) contacts are provided by Ser174 and Thr194. An OCT domain is found at 359 to 437 (GFAKTEKDFE…IGKFEFEFVD (79 aa)).

This sequence belongs to the TRAFAC class OBG-HflX-like GTPase superfamily. OBG GTPase family. Monomer. The cofactor is Mg(2+).

The protein resides in the cytoplasm. Functionally, an essential GTPase which binds GTP, GDP and possibly (p)ppGpp with moderate affinity, with high nucleotide exchange rates and a fairly low GTP hydrolysis rate. Plays a role in control of the cell cycle, stress response, ribosome biogenesis and in those bacteria that undergo differentiation, in morphogenesis control. The sequence is that of GTPase Obg from Streptococcus pyogenes serotype M2 (strain MGAS10270).